An 80-amino-acid polypeptide reads, in one-letter code: Conotoxin SmIVB (80 aa).

A signal peptide spans 1–21 (MGMRMMFTVFLLVVLATTVVS). A propeptide spanning residues 22–38 (IPSDRASDGRNAEVNER) is cleaved from the precursor. At proline 40 the chain carries 4-hydroxyproline. The O-linked (HexNAc...) serine glycan is linked to serine 45. A 4-hydroxyproline mark is found at proline 55, proline 60, proline 61, proline 70, and proline 72. A Serine amide modification is found at serine 75. The propeptide occupies 76-80 (GRRNH).

Belongs to the conotoxin A superfamily. Contains 3 disulfide bonds. Expressed by the venom duct.

The protein localises to the secreted. In terms of biological role, neurotoxin with probable activity on sodium channel. Induces intense repetitive firing of the frog neuromuscular junction, leading to a tetanic contracture in muscle fiber (spastic paralysis). In vivo, shows the same effect as the whole venom when injected on fish prey. This chain is Conotoxin SmIVB, found in Conus stercusmuscarum (Fly-specked cone).